A 933-amino-acid chain; its full sequence is Progesterone receptor (933 aa).

The segment at 1–164 (MTELKAKGPR…PATQGVLSPL (164 aa)) is AF3; mediates transcriptional activation. The interval 1-256 (MTELKAKGPR…AAAGGGAAAV (256 aa)) is disordered. The segment at 1–566 (MTELKAKGPR…YSFESLPQKI (566 aa)) is modulating, Pro-Rich. Ser-20 is subject to Phosphoserine. The short motif at 55–59 (LDGLL) is the LXXL motif 1 element. The residue at position 81 (Ser-81) is a Phosphoserine. The LXXL motif 2 signature appears at 115-119 (LETLL). Phosphoserine is present on residues Ser-130 and Ser-162. The tract at residues 165–305 (MSRSGGKAGD…LATTVMDFIH (141 aa)) is mediates transcriptional transrepression. The Nuclear localization signal signature appears at 183-187 (KVLPR). 2 positions are modified to phosphoserine: Ser-190 and Ser-213. Positions 220 to 231 (EVEEEDGSESEE) are enriched in acidic residues. Over residues 232–246 (SAGPLLKGKPRALGG) the composition is skewed to low complexity. The residue at position 294 (Ser-294) is a Phosphoserine; by MAPK1. The tract at residues 331–378 (GGAGAASAFAPPRSSPSASSTPVAVGDFPDCAYPPDAEPKDDAYPLYS) is disordered. Residues 335 to 350 (AASAFAPPRSSPSASS) are compositionally biased toward low complexity. Residue Ser-345 is modified to Phosphoserine; by MAPK. Lys-388 participates in a covalent cross-link: Glycyl lysine isopeptide (Lys-Gly) (interchain with G-Cter in SUMO); alternate. Residue Lys-388 forms a Glycyl lysine isopeptide (Lys-Gly) (interchain with G-Cter in ubiquitin); alternate linkage. Residue Ser-400 is modified to Phosphoserine; by CDK2. The segment at 415-452 (PDFPLGPPPPLPPRAPPSRPGEAAVTAAPASASVSSAS) is disordered. Residues 418-433 (PLGPPPPLPPRAPPSR) show a composition bias toward pro residues. The span at 434–452 (PGEAAVTAAPASASVSSAS) shows a compositional bias: low complexity. Positions 456–546 (STLECILYKA…VYPPYLNYLR (91 aa)) are AF1; mediates transcriptional activation. Residue Lys-531 forms a Glycyl lysine isopeptide (Lys-Gly) (interchain with G-Cter in SUMO) linkage. 2 NR C4-type zinc fingers span residues 567–587 (CLIC…CGSC) and 603–627 (CAGR…LRKC). The segment at residues 567 to 639 (CLICGDEASG…AGMVLGGRKF (73 aa)) is a DNA-binding region (nuclear receptor). Ser-676 bears the Phosphoserine mark. The region spanning 679-913 (QDIQLIPPLI…EFPEMMSEVI (235 aa)) is the NR LBD domain. An AF2; mediates transcriptional activation region spans residues 687–933 (LINLLMSIEP…MVKPLLFHKK (247 aa)). Arg-766 contacts progesterone.

This sequence belongs to the nuclear hormone receptor family. As to quaternary structure, interacts with SMARD1 and UNC45A. Interacts with CUEDC2; the interaction promotes ubiquitination, decreases sumoylation, and represses transcriptional activity. Interacts with PIAS3; the interaction promotes sumoylation of PR in a hormone-dependent manner, inhibits DNA-binding, and alters nuclear export. Interacts with SP1; the interaction requires ligand-induced phosphorylation on Ser-345 by ERK1/2-MAPK. Interacts with PRMT2. Interacts with NCOA2 and NCOA1. Interacts with KLF9. Interacts with GTF2B. Post-translationally, phosphorylated on multiple serine sites. Several of these sites are hormone-dependent. Phosphorylation on Ser-294 is highly hormone-dependent and modulates ubiquitination and sumoylation on Lys-388. Phosphorylation on Ser-102 and Ser-345 also requires induction by hormone. Basal phosphorylation on Ser-81, Ser-162, Ser-190 and Ser-400 is increased in response to progesterone and can be phosphorylated in vitro by the CDK2-A1 complex. Increased levels of phosphorylation on Ser-400 also in the presence of EGF, heregulin, IGF, PMA and FBS. Phosphorylation at this site by CDK2 is ligand-independent, and increases nuclear translocation and transcriptional activity. Phosphorylation at Ser-162 and Ser-294, but not at Ser-190, is impaired during the G(2)/M phase of the cell cycle. Phosphorylation on Ser-345 by ERK1/2 MAPK is required for interaction with SP1. In terms of processing, sumoylation is hormone-dependent and represses transcriptional activity. Sumoylation on all three sites is enhanced by PIAS3. Desumoylated by SENP1. Sumoylation on Lys-388, the main site of sumoylation, is repressed by ubiquitination on the same site, and modulated by phosphorylation at Ser-294. Ubiquitination is hormone-dependent and represses sumoylation on the same site. Promoted by MAPK-mediated phosphorylation on Ser-294. Ubiquitinated by UBR5, leading to its degradation: UBR5 specifically recognizes and binds ligand-bound PGR when it is not associated with coactivators (NCOAs). In presence of NCOAs, the UBR5-degron is not accessible, preventing its ubiquitination and degradation. Post-translationally, palmitoylated by ZDHHC7 and ZDHHC21. Palmitoylation is required for plasma membrane targeting and for rapid intracellular signaling via ERK and AKT kinases and cAMP generation.

It localises to the nucleus. Its subcellular location is the cytoplasm. Functionally, the steroid hormones and their receptors are involved in the regulation of eukaryotic gene expression and affect cellular proliferation and differentiation in target tissues. Transcriptional activator of several progesteron-dependent promoters in a variety of cell types. Involved in activation of SRC-dependent MAPK signaling on hormone stimulation. This is Progesterone receptor (PGR) from Gorilla gorilla gorilla (Western lowland gorilla).